We begin with the raw amino-acid sequence, 456 residues long: RuvB-like 1 (456 aa).

Residue Lys-2 forms a Glycyl lysine isopeptide (Lys-Gly) (interchain with G-Cter in SUMO2) linkage. Gly-70–Thr-77 lines the ATP pocket. Lys-225 participates in a covalent cross-link: Glycyl lysine isopeptide (Lys-Gly) (interchain with G-Cter in SUMO1); alternate. Lys-225 participates in a covalent cross-link: Glycyl lysine isopeptide (Lys-Gly) (interchain with G-Cter in SUMO2); alternate. Lys-445 participates in a covalent cross-link: Glycyl lysine isopeptide (Lys-Gly) (interchain with G-Cter in SUMO2). At Lys-453 the chain carries N6-acetyllysine.

Belongs to the RuvB family. In terms of assembly, forms homohexameric rings. Can form a dodecamer with RUVBL2 made of two stacked hexameric rings; however, even though RUVBL1 and RUVBL2 are present in equimolar ratio, the oligomeric status of each hexamer is not known. Oligomerization may regulate binding to nucleic acids and conversely, binding to nucleic acids may affect the dodecameric assembly. Interaction of the complex with DHX34 results in conformational changes of the N-terminus of the RUVBL2 subunits, resulting in loss of nucleotide binding ability and ATP hydrolysis of the complex. Interacts with the transcriptional activation domain of MYC. Component of the RNA polymerase II holoenzyme complex. May also act to bridge the LEF1/TCF1-CTNNB1 complex and TBP. Component of the NuA4 histone acetyltransferase complex which contains the catalytic subunit KAT5/TIP60 and the subunits EP400, TRRAP/PAF400, BRD8/SMAP, EPC1, DMAP1/DNMAP1, RUVBL1/TIP49, RUVBL2, ING3, actin, ACTL6A/BAF53A, MORF4L1/MRG15, MORF4L2/MRGX, MRGBP, YEATS4/GAS41, VPS72/YL1 and MEAF6. The NuA4 complex interacts with MYC and the adenovirus E1A protein. RUVBL1 interacts with EP400. Component of a NuA4-related complex which contains EP400, TRRAP/PAF400, SRCAP, BRD8/SMAP, EPC1, DMAP1/DNMAP1, RUVBL1/TIP49, RUVBL2, actin, ACTL6A/BAF53A, VPS72 and YEATS4/GAS41. Component of the BAF53 complex, at least composed of ACTL6A/BAF53A, RUVBL1/TIP49, SMARCA2/BRM, and TRRAP/PAF400. Component of some MLL1/MLL complex, at least composed of the core components KMT2A/MLL1, ASH2L, HCFC1/HCF1, WDR5 and RBBP5, as well as the facultative components BACC1, CHD8, E2F6, HSP70, INO80C, KANSL1, LAS1L, MAX, MCRS1, MGA, MYST1/MOF, PELP1, PHF20, PRP31, RING2, RUVB1/TIP49A, RUVB2/TIP49B, SENP3, TAF1, TAF4, TAF6, TAF7, TAF9 and TEX10. Associates with alpha and gamma tubulins, particularly during metaphase and early anaphase. Interacts with NPAT. Component of the chromatin-remodeling INO80 complex; specifically part of a complex module associated with the helicase ATP-binding and the helicase C-terminal domain of INO80. Interacts with IGHMBP2. Interacts with OFD1. Interacts with HINT1. Component of a complex with USP49 and PSMC5. Component of a SWR1-like complex. Component of the R2TP complex composed at least of RUVBL1, RUVBL2, RPAP3 and PIHD1. Component of the PAQosome complex which is responsible for the biogenesis of several protein complexes and which consists of R2TP complex members RUVBL1, RUVBL2, RPAP3 and PIH1D1, URI complex members PFDN2, PFDN6, PDRG1, UXT and URI1 as well as ASDURF, POLR2E and DNAAF10/WDR92. Interacts with PIH1D1. Interacts with ITFG1. Interacts with WAC; WAC positively regulates MTOR activity by promoting the assembly of the TTT complex composed of TELO2, TTI1 and TTI2 and the RUVBL complex composed of RUVBL1 and RUVBL2 into the TTT-RUVBL complex which leads to the dimerization of the mTORC1 complex and its subsequent activation. The RUVBL1/RUVBL2 complex interacts with ZNHIT1 (via HIT-type zinc finger), ZNHIT3 (via HIT-type zinc finger), ZNHIT6 (via HIT-type zinc finger) and DDX59/ZNHIT5 (via HIT-type zinc finger) in the presence of ADP. Interacts with NOPCHAP1; the interaction is direct and disrupted upon ATP binding. Interacts with SMG1. Interacts with NOP2, NOP56 and NUFIP1. (Microbial infection) Interacts with Mumps L polymerase; this interaction regulates the viral transcription. As to expression, ubiquitously expressed with high expression in heart, skeletal muscle and testis.

The protein localises to the nucleus matrix. It is found in the nucleus. The protein resides in the nucleoplasm. It localises to the cytoplasm. Its subcellular location is the membrane. The protein localises to the cytoskeleton. It is found in the microtubule organizing center. The protein resides in the centrosome. It localises to the dynein axonemal particle. The catalysed reaction is ATP + H2O = ADP + phosphate + H(+). Possesses single-stranded DNA-stimulated ATPase and ATP-dependent DNA helicase (3' to 5') activity; hexamerization is thought to be critical for ATP hydrolysis and adjacent subunits in the ring-like structure contribute to the ATPase activity. Component of the NuA4 histone acetyltransferase complex which is involved in transcriptional activation of select genes principally by acetylation of nucleosomal histones H4 and H2A. This modification may both alter nucleosome-DNA interactions and promote interaction of the modified histones with other proteins which positively regulate transcription. This complex may be required for the activation of transcriptional programs associated with oncogene and proto-oncogene mediated growth induction, tumor suppressor mediated growth arrest and replicative senescence, apoptosis, and DNA repair. The NuA4 complex ATPase and helicase activities seem to be, at least in part, contributed by the association of RUVBL1 and RUVBL2 with EP400. NuA4 may also play a direct role in DNA repair when recruited to sites of DNA damage. Component of a SWR1-like complex that specifically mediates the removal of histone H2A.Z/H2AZ1 from the nucleosome. Proposed core component of the chromatin remodeling INO80 complex which exhibits DNA- and nucleosome-activated ATPase activity and catalyzes ATP-dependent nucleosome sliding. Plays an essential role in oncogenic transformation by MYC and also modulates transcriptional activation by the LEF1/TCF1-CTNNB1 complex. Essential for cell proliferation. May be able to bind plasminogen at cell surface and enhance plasminogen activation. This is RuvB-like 1 from Homo sapiens (Human).